Reading from the N-terminus, the 415-residue chain is Zona pellucida-like domain-containing protein 1 (415 aa).

The first 19 residues, 1–19 (MEQIWLLLLLTIRVLPGSA), serve as a signal peptide directing secretion. At 20–372 (QFNGYNCDAN…PPFQLNAITS (353 aa)) the chain is on the extracellular side. Positions 43–320 (YCGVQAITMK…PICSHRERRD (278 aa)) constitute a ZP domain. 2 cysteine pairs are disulfide-bonded: Cys-44–Cys-155 and Cys-79–Cys-104. N-linked (GlcNAc...) asparagine glycans are attached at residues Asn-121 and Asn-164. Cystine bridges form between Cys-235/Cys-296 and Cys-255/Cys-313. Residues 323 to 360 (RRTTWSPQSSSGSAVLSAGPIITRSDETPTNNSQLGSP) form a disordered region. 2 stretches are compositionally biased toward polar residues: residues 325 to 336 (TTWSPQSSSGSA) and 350 to 359 (TPTNNSQLGS). The chain crosses the membrane as a helical span at residues 373–393 (ALISGMVILGVTSFSLLLCSL). At 394–415 (ALLHRKGPTSLVLNGIRNPVFD) the chain is on the cytoplasmic side.

Post-translationally, proteolytically cleaved before the transmembrane segment to yield the secreted form found in the extracellular matrix of the cupula. As to expression, detected in placenta, kidney, lung, pancreas and at very low level in other tissues.

The protein localises to the cytoplasmic vesicle membrane. The protein resides in the secreted. Its subcellular location is the extracellular space. It is found in the extracellular matrix. Functionally, glycoprotein which is a component of the gelatinous extracellular matrix in the cupulae of the vestibular organ. In Homo sapiens (Human), this protein is Zona pellucida-like domain-containing protein 1 (ZPLD1).